Here is an 883-residue protein sequence, read N- to C-terminus: DNA mismatch repair protein MutS (883 aa).

An ATP-binding site is contributed by 602–609 (GPNMSGKS).

It belongs to the DNA mismatch repair MutS family.

Its function is as follows. This protein is involved in the repair of mismatches in DNA. It is possible that it carries out the mismatch recognition step. This protein has a weak ATPase activity. This chain is DNA mismatch repair protein MutS, found in Staphylococcus haemolyticus (strain JCSC1435).